The primary structure comprises 155 residues: ATP synthase assembly factor FMC1, mitochondrial (155 aa).

This sequence belongs to the FMC1 family.

The protein resides in the mitochondrion. Its function is as follows. Needed for the assembly of the mitochondrial F1-F0 complex at high temperature. In Saccharomyces cerevisiae (strain ATCC 204508 / S288c) (Baker's yeast), this protein is ATP synthase assembly factor FMC1, mitochondrial (FMC1).